Consider the following 137-residue polypeptide: MERTFVMIKPDGVRRGLVGEILARFERKGFRIAALKLMQISQELAERHYAEHREKPFFPGLVRFITSGPVVAMVLEGPGVVAEVRKMMGATHPKDALPGTIRGDFATTIDENVIHGSATLEDAQREIALFFRPEELL.

Residues lysine 9, phenylalanine 57, arginine 85, threonine 91, arginine 102, and asparagine 112 each coordinate ATP. Residue histidine 115 is the Pros-phosphohistidine intermediate of the active site.

It belongs to the NDK family. Homotetramer. Mg(2+) serves as cofactor.

It localises to the cytoplasm. The enzyme catalyses a 2'-deoxyribonucleoside 5'-diphosphate + ATP = a 2'-deoxyribonucleoside 5'-triphosphate + ADP. The catalysed reaction is a ribonucleoside 5'-diphosphate + ATP = a ribonucleoside 5'-triphosphate + ADP. In terms of biological role, major role in the synthesis of nucleoside triphosphates other than ATP. The ATP gamma phosphate is transferred to the NDP beta phosphate via a ping-pong mechanism, using a phosphorylated active-site intermediate. The sequence is that of Nucleoside diphosphate kinase from Thermus thermophilus (strain ATCC 27634 / DSM 579 / HB8).